Reading from the N-terminus, the 306-residue chain is Ribonuclease Z (306 aa).

Positions 63, 65, 67, 68, 141, 211, and 269 each coordinate Zn(2+). The active-site Proton acceptor is Asp67.

This sequence belongs to the RNase Z family. Homodimer. Zn(2+) serves as cofactor.

It carries out the reaction Endonucleolytic cleavage of RNA, removing extra 3' nucleotides from tRNA precursor, generating 3' termini of tRNAs. A 3'-hydroxy group is left at the tRNA terminus and a 5'-phosphoryl group is left at the trailer molecule.. In terms of biological role, zinc phosphodiesterase, which displays some tRNA 3'-processing endonuclease activity. Probably involved in tRNA maturation, by removing a 3'-trailer from precursor tRNA. This is Ribonuclease Z from Staphylococcus aureus (strain Mu3 / ATCC 700698).